A 396-amino-acid chain; its full sequence is UPF0164 protein TP_0858 (396 aa).

Residues 1–28 form the signal peptide; sequence MGTMIRHTFTHRCGALLCALALGSSTMA.

Belongs to the UPF0164 family.

The polypeptide is UPF0164 protein TP_0858 (Treponema pallidum (strain Nichols)).